The sequence spans 604 residues: ATP-dependent RNA helicase dbp6 (604 aa).

The segment covering 1-16 (MSVEVDKSSHSKPKIE) has biased composition (basic and acidic residues). Disordered regions lie at residues 1-37 (MSVE…HVTA) and 51-70 (FSQA…NERD). Low complexity predominate over residues 51–60 (FSQAAQQALK). Residues 149–157 (GFAVQAAVL) carry the Q motif motif. Residues 167 to 379 (GPMYSYGGDV…SLKLHNPRLV (213 aa)) enclose the Helicase ATP-binding domain. 180 to 187 (AATGSGKT) provides a ligand contact to ATP. Residues 292 to 295 (DEAD) carry the DEAD box motif. A Helicase C-terminal domain is found at 406-573 (TLQEYHVSVS…RIKIEFSHIS (168 aa)).

Belongs to the DEAD box helicase family. DDX51/DBP6 subfamily. In terms of assembly, associated with pre-ribosomal particles.

The protein localises to the nucleus. It localises to the nucleolus. It carries out the reaction ATP + H2O = ADP + phosphate + H(+). Functionally, ATP-binding RNA helicase involved in the biogenesis of 60S ribosomal subunits and is required for the normal formation of 25S and 5.8S rRNAs. This chain is ATP-dependent RNA helicase dbp6 (dbp6), found in Schizosaccharomyces pombe (strain 972 / ATCC 24843) (Fission yeast).